A 424-amino-acid chain; its full sequence is MSVDSMLCDRIDIAKQLIKRSEALSRSRVGGVEGGAKLCSKLKAELKFLQKVEAGKVAIKESHLRSTNLTHLQAVIESAESLEEVVSVLHVFSYNDQFGEKQSLVVDVVANGGHTWVKAIGRKAEALHNIWLGRGQYGDKSVIEQAEDYLLASSQQLVQYSSPHIIFAFYNSVSKPMAEKLKEIGISVRGDIVAVNTSQENLPEENYLSGSESDCDGDDTAVLHVSKVDTENIVASIAFPTEIKVEACKRVNLDITTLITYVSALSHGGCHWLFKEKVLTEQAAQERQEKVLPLLKSFMEAKELFACESAIKDFQSILETLGGPAEKERAALLVKSITVVPDQPSERASKLACSSKINSRSISIFGTGETLKAITMTANSGFVRAAANQGVKFSVFIHQPRALTESKESSATPLPNNYASSNLL.

The protein belongs to the UPF0415 family.

The chain is UPF0415 protein C7orf25 homolog from Xenopus laevis (African clawed frog).